The primary structure comprises 743 residues: Polyribonucleotide nucleotidyltransferase (743 aa).

Mg(2+)-binding residues include Asp-489 and Asp-495. Residues 556 to 618 (PRIEKMHIGK…PCIDAAIGMI (63 aa)) enclose the KH domain. The region spanning 628-698 (GETYPGKITS…KTGKFKLSRK (71 aa)) is the S1 motif domain. The interval 704 to 743 (PEGYVEPQPRERRERREGGREGGRNFERRGGDRDHREPRG) is disordered.

This sequence belongs to the polyribonucleotide nucleotidyltransferase family. Mg(2+) is required as a cofactor.

Its subcellular location is the cytoplasm. It carries out the reaction RNA(n+1) + phosphate = RNA(n) + a ribonucleoside 5'-diphosphate. Functionally, involved in mRNA degradation. Catalyzes the phosphorolysis of single-stranded polyribonucleotides processively in the 3'- to 5'-direction. This Porphyromonas gingivalis (strain ATCC BAA-308 / W83) protein is Polyribonucleotide nucleotidyltransferase.